A 171-amino-acid chain; its full sequence is NRR repressor homolog 2 (171 aa).

The span at 1 to 12 (MEARLSTGEKTK) shows a compositional bias: basic and acidic residues. Disordered stretches follow at residues 1–45 (MEAR…QQQM), 65–94 (AALP…APWR), and 119–143 (TTKG…EEDK). Residues 26-43 (PEEETAAETTTSEEEEQQ) are compositionally biased toward acidic residues.

It belongs to the NPR1-interactor family. In terms of assembly, interacts with NPR1/NH1. Interacts with NPR3/NH3.

It localises to the nucleus. Functionally, binds to and weakly represses NPR1/NH1-mediated transcriptional activation of LG2 in vitro. In Oryza sativa subsp. japonica (Rice), this protein is NRR repressor homolog 2.